A 204-amino-acid chain; its full sequence is UPF0637 protein USA300HOU_1046.1 (204 aa).

This sequence belongs to the UPF0637 family.

The protein is UPF0637 protein USA300HOU_1046.1 of Staphylococcus aureus (strain USA300 / TCH1516).